The following is a 160-amino-acid chain: Transcription elongation factor GreA (160 aa).

Residues Ala-50–Ser-70 are a coiled coil.

The protein belongs to the GreA/GreB family.

In terms of biological role, necessary for efficient RNA polymerase transcription elongation past template-encoded arresting sites. The arresting sites in DNA have the property of trapping a certain fraction of elongating RNA polymerases that pass through, resulting in locked ternary complexes. Cleavage of the nascent transcript by cleavage factors such as GreA or GreB allows the resumption of elongation from the new 3'terminus. GreA releases sequences of 2 to 3 nucleotides. The chain is Transcription elongation factor GreA from Legionella pneumophila (strain Corby).